The chain runs to 227 residues: 2,3-bisphosphoglycerate-dependent phosphoglycerate mutase (227 aa).

Substrate contacts are provided by residues 8–15, 21–22, R58, 110–113, K121, 137–138, and 181–182; these read RHGKSVWN, TG, ERMY, RR, and GN. The Tele-phosphohistidine intermediate role is filled by H9. E110 serves as the catalytic Proton donor/acceptor.

Belongs to the phosphoglycerate mutase family. BPG-dependent PGAM subfamily.

The enzyme catalyses (2R)-2-phosphoglycerate = (2R)-3-phosphoglycerate. It participates in carbohydrate degradation; glycolysis; pyruvate from D-glyceraldehyde 3-phosphate: step 3/5. Functionally, catalyzes the interconversion of 2-phosphoglycerate and 3-phosphoglycerate. This chain is 2,3-bisphosphoglycerate-dependent phosphoglycerate mutase, found in Chlamydia caviae (strain ATCC VR-813 / DSM 19441 / 03DC25 / GPIC) (Chlamydophila caviae).